A 148-amino-acid polypeptide reads, in one-letter code: MKIYVDADACPVVSIVERVAQEMKIPVTLLCDTNHILNSTYSDIKIIGAGADAVDFALINLCHRGDVVVTQDYGVAAMALGKGAYAIHQSGKLYENDNIDRMLMERHIAKKARRASSKNHMKGPRKRTSEDDERFEAAFRRLIMRGKV.

The protein belongs to the UPF0178 family.

The sequence is that of UPF0178 protein CA_C2825 from Clostridium acetobutylicum (strain ATCC 824 / DSM 792 / JCM 1419 / IAM 19013 / LMG 5710 / NBRC 13948 / NRRL B-527 / VKM B-1787 / 2291 / W).